Reading from the N-terminus, the 255-residue chain is Large ribosomal subunit protein uL2 (255 aa).

A disordered region spans residues 201-229 (YAHPHGGGSHQQGGTPVKKNAPPGQKVGF).

It belongs to the universal ribosomal protein uL2 family. Part of the 50S ribosomal subunit. Forms a bridge to the 30S subunit in the 70S ribosome.

Functionally, one of the primary rRNA binding proteins. Required for association of the 30S and 50S subunits to form the 70S ribosome, for tRNA binding and peptide bond formation. It has been suggested to have peptidyltransferase activity; this is somewhat controversial. Makes several contacts with the 16S rRNA in the 70S ribosome. The protein is Large ribosomal subunit protein uL2 of Caldivirga maquilingensis (strain ATCC 700844 / DSM 13496 / JCM 10307 / IC-167).